A 267-amino-acid chain; its full sequence is 3-methyl-2-oxobutanoate hydroxymethyltransferase (267 aa).

Mg(2+)-binding residues include Asp46 and Asp85. Residues 46 to 47 (DS), Asp85, and Lys115 each bind 3-methyl-2-oxobutanoate. Residue Glu117 participates in Mg(2+) binding. Catalysis depends on Glu184, which acts as the Proton acceptor.

It belongs to the PanB family. In terms of assembly, homodecamer; pentamer of dimers. Mg(2+) serves as cofactor.

The protein resides in the cytoplasm. The enzyme catalyses 3-methyl-2-oxobutanoate + (6R)-5,10-methylene-5,6,7,8-tetrahydrofolate + H2O = 2-dehydropantoate + (6S)-5,6,7,8-tetrahydrofolate. The protein operates within cofactor biosynthesis; (R)-pantothenate biosynthesis; (R)-pantoate from 3-methyl-2-oxobutanoate: step 1/2. Its function is as follows. Catalyzes the reversible reaction in which hydroxymethyl group from 5,10-methylenetetrahydrofolate is transferred onto alpha-ketoisovalerate to form ketopantoate. This Geotalea uraniireducens (strain Rf4) (Geobacter uraniireducens) protein is 3-methyl-2-oxobutanoate hydroxymethyltransferase.